We begin with the raw amino-acid sequence, 290 residues long: GTPase Era (290 aa).

In terms of domain architecture, Era-type G spans 2-169 (KSGFAAILGR…KNKIYENFSE (168 aa)). The tract at residues 10–17 (GRPSTGKS) is G1. Position 10 to 17 (10 to 17 (GRPSTGKS)) interacts with GTP. A G2 region spans residues 36–40 (QTTRN). The G3 stretch occupies residues 57 to 60 (DTPG). Residues 57-61 (DTPGF) and 119-122 (NKVD) each bind GTP. The segment at 119 to 122 (NKVD) is G4. Residues 148–150 (ISA) are G5. The region spanning 200–276 (LKEELPYSLY…NLFLQVKLKK (77 aa)) is the KH type-2 domain.

The protein belongs to the TRAFAC class TrmE-Era-EngA-EngB-Septin-like GTPase superfamily. Era GTPase family. In terms of assembly, monomer.

The protein resides in the cytoplasm. Its subcellular location is the cell inner membrane. Its function is as follows. An essential GTPase that binds both GDP and GTP, with rapid nucleotide exchange. Plays a role in 16S rRNA processing and 30S ribosomal subunit biogenesis and possibly also in cell cycle regulation and energy metabolism. This Borrelia garinii subsp. bavariensis (strain ATCC BAA-2496 / DSM 23469 / PBi) (Borreliella bavariensis) protein is GTPase Era.